Here is a 268-residue protein sequence, read N- to C-terminus: Undecaprenyl-diphosphatase (268 aa).

Helical transmembrane passes span 39–59, 75–95, 106–126, 179–199, 214–234, and 243–263; these read SETF…LIYK, LPYF…GLWV, LGPV…TEKV, TEFA…FAWI, LTLA…VKWL, and FIPF…LVAL.

Belongs to the UppP family.

Its subcellular location is the cell inner membrane. The enzyme catalyses di-trans,octa-cis-undecaprenyl diphosphate + H2O = di-trans,octa-cis-undecaprenyl phosphate + phosphate + H(+). In terms of biological role, catalyzes the dephosphorylation of undecaprenyl diphosphate (UPP). Confers resistance to bacitracin. This Methylacidiphilum infernorum (isolate V4) (Methylokorus infernorum (strain V4)) protein is Undecaprenyl-diphosphatase.